We begin with the raw amino-acid sequence, 121 residues long: Basic phospholipase A2 (121 aa).

Intrachain disulfides connect cysteine 26-cysteine 114, cysteine 28-cysteine 44, cysteine 43-cysteine 94, cysteine 49-cysteine 121, cysteine 50-cysteine 87, cysteine 57-cysteine 80, and cysteine 74-cysteine 85. The Ca(2+) site is built by tyrosine 27, glycine 29, and glycine 31. Residue histidine 47 is part of the active site. Position 48 (aspartate 48) interacts with Ca(2+). The active site involves aspartate 88.

Homopentamer. Requires Ca(2+) as cofactor. In terms of tissue distribution, expressed by the venom gland.

The protein resides in the secreted. It catalyses the reaction a 1,2-diacyl-sn-glycero-3-phosphocholine + H2O = a 1-acyl-sn-glycero-3-phosphocholine + a fatty acid + H(+). Snake venom phospholipase A2 (PLA2) that displays moderate myotoxic activity in vivo, and cytotoxic activity in vitro. In vitro, shows anticoagulant activity on human plasma and in mice causes inflammatory cell infiltration and myonecrosis in the gastrocnemius muscles of CD-1 mice 3 hours after injection (100 ug). PLA2 catalyzes the calcium-dependent hydrolysis of the 2-acyl groups in 3-sn-phosphoglycerides. The protein is Basic phospholipase A2 of Porthidium ophryomegas (Slender hognose viper).